The chain runs to 156 residues: Small ribosomal subunit protein uS7 (156 aa).

The protein belongs to the universal ribosomal protein uS7 family. As to quaternary structure, part of the 30S ribosomal subunit. Contacts proteins S9 and S11.

Functionally, one of the primary rRNA binding proteins, it binds directly to 16S rRNA where it nucleates assembly of the head domain of the 30S subunit. Is located at the subunit interface close to the decoding center, probably blocks exit of the E-site tRNA. The chain is Small ribosomal subunit protein uS7 from Prochlorococcus marinus (strain NATL2A).